Here is a 513-residue protein sequence, read N- to C-terminus: HTH-type transcriptional regulatory protein TyrR (513 aa).

Residues 2–72 enclose the ACT domain; sequence RLEVFCEDRL…GVTDVRTVPW (71 aa). The PAS domain maps to 78 to 114; sequence EHLALSALLEALPEPVLSVDMKSKVDMANPASCQLFG. The Sigma-54 factor interaction domain maps to 206 to 428; it reads IVAVSPKMKH…LKNAIYRALT (223 aa). Residues 234–241 and 290–299 each bind ATP; these read GDTGTGKD and ANGGSVLLDE. The H-T-H motif DNA-binding region spans 482–502; the sequence is STRKLAKRLGVSHTAIANKLR.

Homodimer. In presence of tyrosine (or high concentrations of phenylalanine or tryptophan) and ATP, it self-associates to form an hexamer. At low tyrosine concentrations, homodimers can bind to certain recognition sequences referred to as 'strong TyrR boxes'. Homohexamers are the active repressing species, interacting with two or three tyrR boxes in the targeted regulatory DNA, including 'strong TyrR boxes' and lower-affinity sites called 'weak TyrR boxes'.

The protein resides in the cytoplasm. Binding of ATP strongly enhances the affinity of TyrR for tyrosine. Dual transcriptional regulator of the TyrR regulon, which includes a number of genes coding for proteins involved in the biosynthesis or transport of the three aromatic amino acids, phenylalanine, tyrosine and tryptophan. These three aromatic amino acids act as effectors which bind to the TyrR protein to form an active regulatory protein. Modulates the expression of at least eight unlinked transcription units, including aroF, aroG, aroLM, aroP, mtr, tyrA, tyrB and tyrP. In most cases TyrR acts as a repressor, but positive effects have been observed on the tyrP gene, which is repressed in the presence of tyrosine and activated at high phenylalanine concentrations. Is also involved in activation, but not repression, of mtr expression in association with phenylalanine or tyrosine. Acts by binding specifically to TyrR boxes in the promoter region of the target genes. The sequence is that of HTH-type transcriptional regulatory protein TyrR from Escherichia coli (strain K12).